A 554-amino-acid polypeptide reads, in one-letter code: Glucose-6-phosphate isomerase (554 aa).

The active-site Proton donor is glutamate 358. Residues histidine 389 and lysine 515 contribute to the active site. A compositionally biased stretch (polar residues) spans 527–540; sequence ANNSPAPQSDSSTD. Positions 527–554 are disordered; that stretch reads ANNSPAPQSDSSTDALVRRYRSERGRTS. Over residues 542 to 554 the composition is skewed to basic and acidic residues; the sequence is LVRRYRSERGRTS.

It belongs to the GPI family.

The protein localises to the cytoplasm. It catalyses the reaction alpha-D-glucose 6-phosphate = beta-D-fructose 6-phosphate. It functions in the pathway carbohydrate biosynthesis; gluconeogenesis. The protein operates within carbohydrate degradation; glycolysis; D-glyceraldehyde 3-phosphate and glycerone phosphate from D-glucose: step 2/4. In terms of biological role, catalyzes the reversible isomerization of glucose-6-phosphate to fructose-6-phosphate. This is Glucose-6-phosphate isomerase from Mycolicibacterium paratuberculosis (strain ATCC BAA-968 / K-10) (Mycobacterium paratuberculosis).